Reading from the N-terminus, the 314-residue chain is Malate dehydrogenase (314 aa).

Residues 11–16 and Asp35 contribute to the NAD(+) site; that span reads GSGNIG. Arg84 and Arg90 together coordinate substrate. NAD(+) contacts are provided by residues Asn97 and 120 to 122; that span reads ITN. Residues Asn122 and Arg153 each contribute to the substrate site. His177 (proton acceptor) is an active-site residue.

Belongs to the LDH/MDH superfamily. MDH type 3 family.

The catalysed reaction is (S)-malate + NAD(+) = oxaloacetate + NADH + H(+). Its function is as follows. Catalyzes the reversible oxidation of malate to oxaloacetate. This Rickettsia rickettsii (strain Iowa) protein is Malate dehydrogenase.